Consider the following 491-residue polypeptide: Argininosuccinate lyase (491 aa).

It belongs to the lyase 1 family. Argininosuccinate lyase subfamily.

The protein localises to the cytoplasm. The enzyme catalyses 2-(N(omega)-L-arginino)succinate = fumarate + L-arginine. Its pathway is amino-acid biosynthesis; L-arginine biosynthesis; L-arginine from L-ornithine and carbamoyl phosphate: step 3/3. This chain is Argininosuccinate lyase, found in Methanococcoides burtonii (strain DSM 6242 / NBRC 107633 / OCM 468 / ACE-M).